The sequence spans 452 residues: Bifunctional protein GlmU (452 aa).

Positions 1-226 (MNFSAVILAA…PIEVEGVNDR (226 aa)) are pyrophosphorylase. Residues 8–11 (LAAG), Lys22, Gln73, 78–79 (GT), 100–102 (YGD), Gly137, Glu151, Asn166, and Asn224 contribute to the UDP-N-acetyl-alpha-D-glucosamine site. Asp102 is a binding site for Mg(2+). A Mg(2+)-binding site is contributed by Asn224. Residues 227–247 (AQLARLERAYQAAQAQKLLEQ) are linker. The tract at residues 248 to 452 (GVMLRDPSRF…IANWQRPTKK (205 aa)) is N-acetyltransferase. Residues Arg330 and Lys348 each contribute to the UDP-N-acetyl-alpha-D-glucosamine site. The active-site Proton acceptor is His360. The UDP-N-acetyl-alpha-D-glucosamine site is built by Tyr363 and Asn374. Residues Ala377, 383–384 (NY), Ser402, Ala420, and Arg437 each bind acetyl-CoA.

In the N-terminal section; belongs to the N-acetylglucosamine-1-phosphate uridyltransferase family. This sequence in the C-terminal section; belongs to the transferase hexapeptide repeat family. Homotrimer. The cofactor is Mg(2+).

The protein resides in the cytoplasm. It carries out the reaction alpha-D-glucosamine 1-phosphate + acetyl-CoA = N-acetyl-alpha-D-glucosamine 1-phosphate + CoA + H(+). The enzyme catalyses N-acetyl-alpha-D-glucosamine 1-phosphate + UTP + H(+) = UDP-N-acetyl-alpha-D-glucosamine + diphosphate. Its pathway is nucleotide-sugar biosynthesis; UDP-N-acetyl-alpha-D-glucosamine biosynthesis; N-acetyl-alpha-D-glucosamine 1-phosphate from alpha-D-glucosamine 6-phosphate (route II): step 2/2. It participates in nucleotide-sugar biosynthesis; UDP-N-acetyl-alpha-D-glucosamine biosynthesis; UDP-N-acetyl-alpha-D-glucosamine from N-acetyl-alpha-D-glucosamine 1-phosphate: step 1/1. It functions in the pathway bacterial outer membrane biogenesis; LPS lipid A biosynthesis. In terms of biological role, catalyzes the last two sequential reactions in the de novo biosynthetic pathway for UDP-N-acetylglucosamine (UDP-GlcNAc). The C-terminal domain catalyzes the transfer of acetyl group from acetyl coenzyme A to glucosamine-1-phosphate (GlcN-1-P) to produce N-acetylglucosamine-1-phosphate (GlcNAc-1-P), which is converted into UDP-GlcNAc by the transfer of uridine 5-monophosphate (from uridine 5-triphosphate), a reaction catalyzed by the N-terminal domain. The protein is Bifunctional protein GlmU of Aliivibrio fischeri (strain MJ11) (Vibrio fischeri).